The primary structure comprises 237 residues: Large ribosomal subunit protein uL3 (237 aa).

2 disordered regions span residues 133–155 (ASHG…DPGK) and 213–237 (PENA…EGAE). Over residues 135 to 150 (HGNSITHRSHGSTGQR) the composition is skewed to polar residues. The residue at position 151 (Gln-151) is an N5-methylglutamine. Residues 220–237 (AGLRAGAKAEAAATEGAE) are compositionally biased toward low complexity.

It belongs to the universal ribosomal protein uL3 family. In terms of assembly, part of the 50S ribosomal subunit. Forms a cluster with proteins L14 and L19. Post-translationally, methylated by PrmB.

Its function is as follows. One of the primary rRNA binding proteins, it binds directly near the 3'-end of the 23S rRNA, where it nucleates assembly of the 50S subunit. In Brucella suis biovar 1 (strain 1330), this protein is Large ribosomal subunit protein uL3.